The sequence spans 150 residues: UPF0756 membrane protein YPN_1328 (150 aa).

Helical transmembrane passes span 16–36 (ALGI…LIAI), 51–71 (YGLT…IASG), 88–108 (ILAI…VSLM), and 114–134 (VVAG…GVPV).

This sequence belongs to the UPF0756 family.

The protein resides in the cell membrane. The polypeptide is UPF0756 membrane protein YPN_1328 (Yersinia pestis bv. Antiqua (strain Nepal516)).